The sequence spans 91 residues: DNA-directed RNA polymerase subunit omega (91 aa).

Belongs to the RNA polymerase subunit omega family. In terms of assembly, the RNAP catalytic core consists of 2 alpha, 1 beta, 1 beta' and 1 omega subunit. When a sigma factor is associated with the core the holoenzyme is formed, which can initiate transcription.

The enzyme catalyses RNA(n) + a ribonucleoside 5'-triphosphate = RNA(n+1) + diphosphate. Promotes RNA polymerase assembly. Latches the N- and C-terminal regions of the beta' subunit thereby facilitating its interaction with the beta and alpha subunits. The polypeptide is DNA-directed RNA polymerase subunit omega (Proteus mirabilis (strain HI4320)).